A 151-amino-acid polypeptide reads, in one-letter code: MRHGVSGRKLNRATSHRLAMFRNMVTSLLQHERIFTTLPKAKELRRWADWMISLGKRGDLHARRQVMACVREKETVQKIFAELGPRYQSRPGGYTRIVKAGYRRGDASPMCLIELITEAKQPPRKEKAKKPAPVQAEEASATPASEEKAQD.

The interval 118–151 is disordered; that stretch reads EAKQPPRKEKAKKPAPVQAEEASATPASEEKAQD. Positions 131–144 are enriched in low complexity; sequence PAPVQAEEASATPA.

Belongs to the bacterial ribosomal protein bL17 family. As to quaternary structure, part of the 50S ribosomal subunit. Contacts protein L32.

The polypeptide is Large ribosomal subunit protein bL17 (Syntrophobacter fumaroxidans (strain DSM 10017 / MPOB)).